Reading from the N-terminus, the 319-residue chain is Acetyl-coenzyme A carboxylase carboxyl transferase subunit alpha (319 aa).

Positions asparagine 32–alanine 293 constitute a CoA carboxyltransferase C-terminal domain.

The protein belongs to the AccA family. Acetyl-CoA carboxylase is a heterohexamer composed of biotin carboxyl carrier protein (AccB), biotin carboxylase (AccC) and two subunits each of ACCase subunit alpha (AccA) and ACCase subunit beta (AccD).

The protein resides in the cytoplasm. It carries out the reaction N(6)-carboxybiotinyl-L-lysyl-[protein] + acetyl-CoA = N(6)-biotinyl-L-lysyl-[protein] + malonyl-CoA. It functions in the pathway lipid metabolism; malonyl-CoA biosynthesis; malonyl-CoA from acetyl-CoA: step 1/1. Component of the acetyl coenzyme A carboxylase (ACC) complex. First, biotin carboxylase catalyzes the carboxylation of biotin on its carrier protein (BCCP) and then the CO(2) group is transferred by the carboxyltransferase to acetyl-CoA to form malonyl-CoA. The chain is Acetyl-coenzyme A carboxylase carboxyl transferase subunit alpha from Xanthomonas axonopodis pv. citri (strain 306).